A 176-amino-acid polypeptide reads, in one-letter code: ATP-dependent protease subunit HslV (176 aa).

Thr-2 is an active-site residue. 3 residues coordinate Na(+): Gly-157, Cys-160, and Thr-163.

It belongs to the peptidase T1B family. HslV subfamily. In terms of assembly, a double ring-shaped homohexamer of HslV is capped on each side by a ring-shaped HslU homohexamer. The assembly of the HslU/HslV complex is dependent on binding of ATP.

It is found in the cytoplasm. The catalysed reaction is ATP-dependent cleavage of peptide bonds with broad specificity.. Allosterically activated by HslU binding. Protease subunit of a proteasome-like degradation complex believed to be a general protein degrading machinery. This is ATP-dependent protease subunit HslV from Ectopseudomonas mendocina (strain ymp) (Pseudomonas mendocina).